The primary structure comprises 620 residues: MSFDIAKYPTLALVDSTQELRLLPKESLPKLCDELRRYLLDSVSRSSGHFASGLGTVELTVALHYVYNTPFDQLIWDVGHQAYPHKILTGRRDKIGTIRQKGGLHPFPWRGESEYDVLSVGHSSTSISAGIGIAVAAEKEGKNRRTVCVIGDGAITAGMAFEAMNHAGDIRPDMLVILNDNEMSISENVGALNNHLAQLLSGKLYSSLREGGKKVFSGVPPIKELLKRTEEHIKGMVVPGTLFEELGFNYIGPVDGHDVLGLITTLKNMRDLKGPQFLHIMTKKGRGYEPAEKDPITFHAVPKFDPSSGCLPKSSGGLPSYSKIFGDWLCETAAKDNKLMAITPAMREGSGMVEFSRKFPDRYFDVAIAEQHAVTFAAGLAIGGYKPIVAIYSTFLQRAYDQVLHDVAIQKLPVLFAIDRAGIVGADGQTHQGAFDLSYLRCIPEMVIMTPSDENECRQMLYTGYHYNDGPSAVRYPRGNAVGVELTPLEKLPIGKGIVKRRGEKLAILNFGTLMPEAAKVAESLNATLVDMRFVKPLDEALILEMAASHEALVTVEENAIMGGAGSGVNEVLMAHRKPVPVLNIGLPDFFIPQGTQEEMRAELGLDAAGMEAKIKAWLA.

Thiamine diphosphate contacts are provided by residues H80 and 121-123; that span reads GHS. Residue D152 coordinates Mg(2+). Thiamine diphosphate is bound by residues 153-154, N181, Y288, and E370; that span reads GA. Position 181 (N181) interacts with Mg(2+).

The protein belongs to the transketolase family. DXPS subfamily. In terms of assembly, homodimer. Mg(2+) is required as a cofactor. Requires thiamine diphosphate as cofactor.

It carries out the reaction D-glyceraldehyde 3-phosphate + pyruvate + H(+) = 1-deoxy-D-xylulose 5-phosphate + CO2. Its pathway is metabolic intermediate biosynthesis; 1-deoxy-D-xylulose 5-phosphate biosynthesis; 1-deoxy-D-xylulose 5-phosphate from D-glyceraldehyde 3-phosphate and pyruvate: step 1/1. Its function is as follows. Catalyzes the acyloin condensation reaction between C atoms 2 and 3 of pyruvate and glyceraldehyde 3-phosphate to yield 1-deoxy-D-xylulose-5-phosphate (DXP). This is 1-deoxy-D-xylulose-5-phosphate synthase from Escherichia coli (strain K12 / MC4100 / BW2952).